A 95-amino-acid chain; its full sequence is Exodeoxyribonuclease 7 small subunit (95 aa).

The protein belongs to the XseB family. In terms of assembly, heterooligomer composed of large and small subunits.

It is found in the cytoplasm. It catalyses the reaction Exonucleolytic cleavage in either 5'- to 3'- or 3'- to 5'-direction to yield nucleoside 5'-phosphates.. Bidirectionally degrades single-stranded DNA into large acid-insoluble oligonucleotides, which are then degraded further into small acid-soluble oligonucleotides. This chain is Exodeoxyribonuclease 7 small subunit, found in Corynebacterium aurimucosum (strain ATCC 700975 / DSM 44827 / CIP 107346 / CN-1) (Corynebacterium nigricans).